The primary structure comprises 438 residues: Transposon Ty2-OR2 Gag polyprotein (438 aa).

Disordered stretches follow at residues 1 to 88 (MESQ…YQQH), 365 to 397 (NVSR…AKAH), and 419 to 438 (SSQY…TERI). Polar residues-rich tracts occupy residues 19–39 (ASVT…SASN) and 49–60 (KVNSQEETTPGT). Residues 295 to 397 (ENNINVSDRL…SSKPRAAKAH (103 aa)) form an RNA-binding region. Over residues 369-381 (TSPNTTNTKVTTR) the composition is skewed to low complexity.

In terms of assembly, homotrimer.

The protein localises to the cytoplasm. In terms of biological role, capsid protein (CA) is the structural component of the virus-like particle (VLP), forming the shell that encapsulates the retrotransposons dimeric RNA genome. The particles are assembled from trimer-clustered units and there are holes in the capsid shells that allow for the diffusion of macromolecules. CA also has nucleocapsid-like chaperone activity, promoting primer tRNA(i)-Met annealing to the multipartite primer-binding site (PBS), dimerization of Ty2 RNA and initiation of reverse transcription. The polypeptide is Transposon Ty2-OR2 Gag polyprotein (TY2A-OR2) (Saccharomyces cerevisiae (strain ATCC 204508 / S288c) (Baker's yeast)).